We begin with the raw amino-acid sequence, 357 residues long: A-type ATP synthase subunit C (357 aa).

The protein belongs to the V-ATPase V0D/AC39 subunit family. Has multiple subunits with at least A(3), B(3), C, D, E, F, H, I and proteolipid K(x).

Its subcellular location is the cell membrane. Functionally, component of the A-type ATP synthase that produces ATP from ADP in the presence of a proton gradient across the membrane. This is A-type ATP synthase subunit C from Methanococcoides burtonii (strain DSM 6242 / NBRC 107633 / OCM 468 / ACE-M).